A 913-amino-acid chain; its full sequence is ER degradation-enhancing alpha-mannosidase-like protein 3 (913 aa).

The N-terminal stretch at 1 to 15 is a signal peptide; the sequence is MGCPAVEARRWGDMW. N-linked (GlcNAc...) asparagine glycosylation is present at Asn-104. Catalysis depends on Glu-132, which acts as the Proton donor. Asn-181 carries an N-linked (GlcNAc...) asparagine glycan. The active site involves Asp-279. Catalysis depends on Glu-373, which acts as the Proton donor. Residue Glu-391 is part of the active site. Thr-477 is a Ca(2+) binding site. A glycan (N-linked (GlcNAc...) asparagine) is linked at Asn-497. The 107-residue stretch at 660 to 766 folds into the PA domain; the sequence is LSKHLAGAQG…KEGNIILDAI (107 aa). Asn-797 carries N-linked (GlcNAc...) asparagine glycosylation. Residues 823 to 895 are disordered; that stretch reads EESPVSQPEV…NKVQPMESIL (73 aa). Low complexity predominate over residues 826-839; that stretch reads PVSQPEVPSSDSPS. Basic and acidic residues predominate over residues 843 to 866; the sequence is RTSERDITPESQEHKTEETEHSPK. The Prevents secretion from ER motif lies at 910-913; sequence KDEL.

Belongs to the glycosyl hydrolase 47 family. It depends on Ca(2+) as a cofactor.

Its subcellular location is the endoplasmic reticulum lumen. It catalyses the reaction N(4)-(alpha-D-Man-(1-&gt;2)-alpha-D-Man-(1-&gt;2)-alpha-D-Man-(1-&gt;3)-[alpha-D-Man-(1-&gt;2)-alpha-D-Man-(1-&gt;3)-[alpha-D-Man-(1-&gt;2)-alpha-D-Man-(1-&gt;6)]-alpha-D-Man-(1-&gt;6)]-beta-D-Man-(1-&gt;4)-beta-D-GlcNAc-(1-&gt;4)-beta-D-GlcNAc)-L-asparaginyl-[protein] (N-glucan mannose isomer 9A1,2,3B1,2,3) + 4 H2O = N(4)-(alpha-D-Man-(1-&gt;3)-[alpha-D-Man-(1-&gt;3)-[alpha-D-Man-(1-&gt;6)]-alpha-D-Man-(1-&gt;6)]-beta-D-Man-(1-&gt;4)-beta-D-GlcNAc-(1-&gt;4)-beta-D-GlcNAc)-L-asparaginyl-[protein] (N-glucan mannose isomer 5A1,2) + 4 beta-D-mannose. The catalysed reaction is N(4)-(alpha-D-Man-(1-&gt;2)-alpha-D-Man-(1-&gt;2)-alpha-D-Man-(1-&gt;3)-[alpha-D-Man-(1-&gt;3)-[alpha-D-Man-(1-&gt;2)-alpha-D-Man-(1-&gt;6)]-alpha-D-Man-(1-&gt;6)]-beta-D-Man-(1-&gt;4)-beta-D-GlcNAc-(1-&gt;4)-beta-D-GlcNAc)-L-asparaginyl-[protein] (N-glucan mannose isomer 8A1,2,3B1,3) + 3 H2O = N(4)-(alpha-D-Man-(1-&gt;3)-[alpha-D-Man-(1-&gt;3)-[alpha-D-Man-(1-&gt;6)]-alpha-D-Man-(1-&gt;6)]-beta-D-Man-(1-&gt;4)-beta-D-GlcNAc-(1-&gt;4)-beta-D-GlcNAc)-L-asparaginyl-[protein] (N-glucan mannose isomer 5A1,2) + 3 beta-D-mannose. It participates in protein modification; protein glycosylation. Functionally, may be involved in endoplasmic reticulum-associated degradation (ERAD). The sequence is that of ER degradation-enhancing alpha-mannosidase-like protein 3 (edem3) from Xenopus laevis (African clawed frog).